A 227-amino-acid polypeptide reads, in one-letter code: IVGGEDANVQDHPFTVALVTPDGQQFCGGTLAAPNKVVTAAHCTVGSQPADINVVSGRTVMSSNIGTVSKVTNVWVHPEYQDAAKGFDVSVLTLEAPVKEAPIELAKADDAGYAPDTAATILGWGNTSEGGQQADHLQKATVPVNSDDTCKQAYGEYTPNAMVCAGVPEGGVDTCQGDSGGPMVVNNKLIGVTSWGEGCARPGKPGVYARVGAYYDVLMEQINAGAV.

A Peptidase S1 domain is found at 1-223 (IVGGEDANVQ…YYDVLMEQIN (223 aa)). Cysteine 27 and cysteine 43 are oxidised to a cystine. Catalysis depends on charge relay system residues histidine 42 and aspartate 88. 2 disulfides stabilise this stretch: cysteine 150/cysteine 164 and cysteine 175/cysteine 199. Serine 179 functions as the Charge relay system in the catalytic mechanism.

Belongs to the peptidase S1 family.

The catalysed reaction is Preferential cleavage: Arg-|-Xaa, Lys-|-Xaa.. In Saccharopolyspora erythraea (Streptomyces erythraeus), this protein is Trypsin.